The sequence spans 269 residues: Growth-regulating factor 11 (269 aa).

The segment covering 1-11 (MAAEGEAKKDS) has biased composition (basic and acidic residues). The tract at residues 1–71 (MAAEGEAKKD…GKEDVEEGGV (71 aa)) is disordered. The segment covering 43–52 (GEAGGGGGGG) has biased composition (gly residues). Positions 58–68 (EEEEGKEDVEE) are enriched in acidic residues. Positions 114–149 (AFTAMQLQELEQQSRVYQYMAARVPVPTHLVFPIWK) constitute a QLQ domain. Residues 180-224 (EPEPGRCRRTDGKKWRCWRNAIANEKYCERHMHRGRKRPVQLVVE) form the WRC domain. 2 consecutive short sequence motifs (bipartite nuclear localization signal) follow at residues 185–195 (RCRRTDGKKWR) and 213–217 (RGRKR). Positions 212-269 (HRGRKRPVQLVVEDDEPDSTSGSKPASGKATEGGKKTDDKSSSSKKLAVAAPAAVEST) are disordered. The segment covering 243 to 253 (EGGKKTDDKSS) has biased composition (basic and acidic residues). Positions 255–269 (SKKLAVAAPAAVEST) are enriched in low complexity.

It belongs to the GRF family.

It is found in the nucleus. In terms of biological role, transcription activator that plays a regulatory role in gibberellin-induced stem elongation. The polypeptide is Growth-regulating factor 11 (GRF11) (Oryza sativa subsp. japonica (Rice)).